The following is a 156-amino-acid chain: Small ribosomal subunit protein uS7 (156 aa).

It belongs to the universal ribosomal protein uS7 family. Part of the 30S ribosomal subunit. Contacts proteins S9 and S11.

One of the primary rRNA binding proteins, it binds directly to 16S rRNA where it nucleates assembly of the head domain of the 30S subunit. Is located at the subunit interface close to the decoding center, probably blocks exit of the E-site tRNA. The chain is Small ribosomal subunit protein uS7 from Rhizobium rhizogenes (strain K84 / ATCC BAA-868) (Agrobacterium radiobacter).